A 446-amino-acid chain; its full sequence is Cyclin-T1-1 (446 aa).

It belongs to the cyclin family. Cyclin T subfamily.

The chain is Cyclin-T1-1 (CYCT1-1) from Oryza sativa subsp. japonica (Rice).